The following is a 347-amino-acid chain: uncharacterized protein (347 aa).

Disordered stretches follow at residues 1–40 (MAQELAAPLSCGQPPGQNITETTTDPWDEGDLRFEPSNSM), 72–92 (SCEDSSSEGPSMHFVPPIQGS), 133–158 (SDSTTNCDLSGDNKDKHPKEKTQLTL), 173–209 (ENQKDDKDDDSVFPESAQEEDSQLPSSSLPGMAQVSH), and 306–347 (EDPR…PPDF). Residues 15–25 (PGQNITETTTD) are compositionally biased toward polar residues. Positions 143–154 (GDNKDKHPKEKT) are enriched in basic and acidic residues. Residues 179-194 (KDDDSVFPESAQEEDS) show a composition bias toward acidic residues. A compositionally biased stretch (polar residues) spans 195–209 (QLPSSSLPGMAQVSH). The span at 306–318 (EDPREANERPREL) shows a compositional bias: basic and acidic residues. A compositionally biased stretch (basic residues) spans 319–330 (ARKKRFSYRSKR).

This is an uncharacterized protein from Bos taurus (Bovine).